A 618-amino-acid chain; its full sequence is Proline--tRNA ligase (618 aa).

It belongs to the class-II aminoacyl-tRNA synthetase family. ProS type 1 subfamily. As to quaternary structure, homodimer.

The protein resides in the cytoplasm. It carries out the reaction tRNA(Pro) + L-proline + ATP = L-prolyl-tRNA(Pro) + AMP + diphosphate. In terms of biological role, catalyzes the attachment of proline to tRNA(Pro) in a two-step reaction: proline is first activated by ATP to form Pro-AMP and then transferred to the acceptor end of tRNA(Pro). As ProRS can inadvertently accommodate and process non-cognate amino acids such as alanine and cysteine, to avoid such errors it has two additional distinct editing activities against alanine. One activity is designated as 'pretransfer' editing and involves the tRNA(Pro)-independent hydrolysis of activated Ala-AMP. The other activity is designated 'posttransfer' editing and involves deacylation of mischarged Ala-tRNA(Pro). The misacylated Cys-tRNA(Pro) is not edited by ProRS. In Streptococcus pyogenes serotype M12 (strain MGAS2096), this protein is Proline--tRNA ligase.